We begin with the raw amino-acid sequence, 480 residues long: Protein nucleotidyltransferase YdiU (480 aa).

Glycine 86, glycine 88, arginine 89, lysine 109, aspartate 121, glycine 122, arginine 172, and arginine 179 together coordinate ATP. The active-site Proton acceptor is the aspartate 248. The Mg(2+) site is built by asparagine 249 and aspartate 258. Position 258 (aspartate 258) interacts with ATP.

It belongs to the SELO family. It depends on Mg(2+) as a cofactor. Requires Mn(2+) as cofactor.

The enzyme catalyses L-seryl-[protein] + ATP = 3-O-(5'-adenylyl)-L-seryl-[protein] + diphosphate. It catalyses the reaction L-threonyl-[protein] + ATP = 3-O-(5'-adenylyl)-L-threonyl-[protein] + diphosphate. The catalysed reaction is L-tyrosyl-[protein] + ATP = O-(5'-adenylyl)-L-tyrosyl-[protein] + diphosphate. It carries out the reaction L-histidyl-[protein] + UTP = N(tele)-(5'-uridylyl)-L-histidyl-[protein] + diphosphate. The enzyme catalyses L-seryl-[protein] + UTP = O-(5'-uridylyl)-L-seryl-[protein] + diphosphate. It catalyses the reaction L-tyrosyl-[protein] + UTP = O-(5'-uridylyl)-L-tyrosyl-[protein] + diphosphate. Its function is as follows. Nucleotidyltransferase involved in the post-translational modification of proteins. It can catalyze the addition of adenosine monophosphate (AMP) or uridine monophosphate (UMP) to a protein, resulting in modifications known as AMPylation and UMPylation. The protein is Protein nucleotidyltransferase YdiU of Salmonella paratyphi C (strain RKS4594).